Reading from the N-terminus, the 207-residue chain is dTDP-4-dehydrorhamnose 3-epimerase (207 aa).

Residues Arg23, Asp28, 47–49 (QAN), and Arg59 contribute to the substrate site. The active-site Proton acceptor is His62. 2 residues coordinate substrate: Lys72 and His119. The active-site Proton donor is the Tyr132. Positions 143 and 167 each coordinate substrate.

It belongs to the dTDP-4-dehydrorhamnose 3,5-epimerase family.

Its pathway is antibiotic biosynthesis; novobiocin biosynthesis. Functionally, dTDP-6-deoxy-D-xylo-4-hexulose 3-epimerase that acts together with NovU to catalyze the formation of dTDP-4-keto-6-deoxy-5-C-methyl-L-lyxo-hexose from dTDP-4-keto-6-deoxy-D-glucose in the novobiocin biosynthesis pathway, an aminocoumarin family antibiotic that targets bacterial DNA gyrases. This Streptomyces niveus (Streptomyces spheroides) protein is dTDP-4-dehydrorhamnose 3-epimerase.